We begin with the raw amino-acid sequence, 241 residues long: Cobalt transport protein CbiM (241 aa).

The signal sequence occupies residues 1-24 (MKKIKIISFSVAYLILLTPIYASA). 6 helical membrane passes run 30-50 (GFLPPLWAAIWSVISLPFIVG), 67-87 (LLLGLVGAFVFVLSALKLPSV), 99-119 (LGTIIFGPLPMAVIGLIVLIF), 131-151 (TLGANVFSMAIVGPFAGYFIF), 160-180 (SLAVFLAAMLADLITYIVTSL), and 202-222 (GIFAITQIPLAIGEGILTLIV).

It belongs to the CbiM family. Forms an energy-coupling factor (ECF) transporter complex composed of an ATP-binding protein (A component, CbiO), a transmembrane protein (T component, CbiQ) and 2 possible substrate-capture proteins (S components, CbiM and CbiN) of unknown stoichimetry.

The protein resides in the cell membrane. It participates in cofactor biosynthesis; adenosylcobalamin biosynthesis. Part of the energy-coupling factor (ECF) transporter complex CbiMNOQ involved in cobalt import. This Acetoanaerobium sticklandii (strain ATCC 12662 / DSM 519 / JCM 1433 / CCUG 9281 / NCIMB 10654 / HF) (Clostridium sticklandii) protein is Cobalt transport protein CbiM.